Here is a 229-residue protein sequence, read N- to C-terminus: E3 ubiquitin ligase TRIM40 (229 aa).

An RING-type zinc finger spans residues 14–57; the sequence is CPICQESLKEAVSTNCGHLFCRVCLTQHVEKASASGVFCCPLCR. The B box-type zinc finger occupies 66–107; it reads GTGYICPNHQKRVCRFCEESRLLLCVECLVSPEHMSHHELTI. Zn(2+) is bound by residues Cys-71, His-74, Cys-93, and His-99. Residues 107–154 are a coiled coil; sequence IENALSHYKERLNRRSRKLRKDIAELQRLKAQQEKKLQALQQWLGQLE.

The protein belongs to the TRIM/RBCC family. In terms of assembly, interacts with NEDD8.

It carries out the reaction S-ubiquitinyl-[E2 ubiquitin-conjugating enzyme]-L-cysteine + [acceptor protein]-L-lysine = [E2 ubiquitin-conjugating enzyme]-L-cysteine + N(6)-ubiquitinyl-[acceptor protein]-L-lysine.. Its function is as follows. E3 ubiquitin-protein ligase that plays a role in the limitation of the innate immune response. Mediates inhibition of the RLR signaling pathway by ubiquitinating RIGI and IFIH1 receptors, leading to their proteasomal degradation. Also promotes the neddylation of IKBKG/NEMO, stabilizing NFKBIA, and thereby inhibiting of NF-kappa-B nuclear translocation and activation. The protein is E3 ubiquitin ligase TRIM40 (TRIM40) of Pan troglodytes (Chimpanzee).